A 254-amino-acid chain; its full sequence is MAIANKNIIFVAGLGGIGLDTSREIVKSGPKNLVILDRIDNPTAIAELKAINPKVTVTFYPYDVTVPLAETTKLLKTIFAQLKTVDLLINGAGILDDHQIERTIAVNFTGTVNTTTAIMEFWDKRKGGPGGVVANICSVTGFNAIYQVPVYSASKAAALSFTNSLARLAPITGVTAYSINPGITRTPLVHRFNSWLDVEPRVGELLLEHPTQTTLECAQNFVKAIEANKNGAIWQLDLGQLIAVEWTKHWDSHI.

10 to 33 (FVAGLGGIGLDTSREIVKSGPKNL) lines the NAD(+) pocket. Serine 138 provides a ligand contact to substrate. Tyrosine 151 functions as the Proton acceptor in the catalytic mechanism.

This sequence belongs to the short-chain dehydrogenases/reductases (SDR) family. In terms of assembly, homodimer.

It carries out the reaction a primary alcohol + NAD(+) = an aldehyde + NADH + H(+). The catalysed reaction is a secondary alcohol + NAD(+) = a ketone + NADH + H(+). The chain is Alcohol dehydrogenase (Adh) from Drosophila borealis (Fruit fly).